Here is a 585-residue protein sequence, read N- to C-terminus: Glutamate decarboxylase 2 (585 aa).

The disordered stretch occupies residues 1 to 24 (MASPGSGFWSFGSEDGSADPENPG). 4 positions are modified to phosphoserine: Ser3, Ser6, Ser10, and Ser13. S-palmitoyl cysteine attachment occurs at residues Cys30 and Cys45. Substrate is bound at residue 181–183 (QLS). At Lys396 the chain carries N6-(pyridoxal phosphate)lysine. Substrate is bound at residue Arg558.

It belongs to the group II decarboxylase family. As to quaternary structure, homodimer. Pyridoxal 5'-phosphate is required as a cofactor. In terms of processing, phosphorylated; which does not affect kinetic parameters or subcellular location. Post-translationally, palmitoylated; which is required for presynaptic clustering.

The protein localises to the cytoplasm. Its subcellular location is the cytosol. The protein resides in the cytoplasmic vesicle. It localises to the presynaptic cell membrane. It is found in the golgi apparatus membrane. It carries out the reaction L-glutamate + H(+) = 4-aminobutanoate + CO2. Catalyzes the production of GABA. The chain is Glutamate decarboxylase 2 (Gad2) from Mus musculus (Mouse).